The sequence spans 482 residues: 7-deoxyloganetic acid glucosyltransferase (482 aa).

The Proton acceptor role is filled by His-22. Residue His-22 participates in an anthocyanidin binding. Asp-127 (charge relay) is an active-site residue. UDP-alpha-D-glucose contacts are provided by Thr-149, Ala-362, Gln-364, His-379, Trp-382, Asn-383, Ser-384, and Glu-387. Residue Ala-402 coordinates an anthocyanidin. UDP-alpha-D-glucose is bound by residues Asp-403 and Gln-404.

The protein belongs to the UDP-glycosyltransferase family. As to expression, expressed in leaves, roots and stems. Lower levels of expression in flowers. Preferentially expressed in internal phloem parenchyma cells.

The enzyme catalyses 7-deoxyloganetate + UDP-alpha-D-glucose = 7-deoxyloganate + UDP + H(+). Functionally, iridoid glucosyltransferase acting exclusively on 7-deoxyloganetic acid. No activity with 7-deoxyloganetin. Catalyzes the fourth to last step in secologanin biosynthesis. This chain is 7-deoxyloganetic acid glucosyltransferase (UGT709C2), found in Catharanthus roseus (Madagascar periwinkle).